Here is a 363-residue protein sequence, read N- to C-terminus: NAD(P)H-quinone oxidoreductase subunit 1, chloroplastic (363 aa).

Helical transmembrane passes span 27–47, 93–113, 124–144, 162–182, 200–220, 250–270, 303–323, and 343–363; these read LIPILIILLGATLGVLVIVWL, WLFSVGPALVVVPVFLSYLVV, LGVGILFWIALSSIAPLGLLM, AAQAISYEIPLALCVLSVALL, ILGWNIWRQPIGFIAFLIASL, FGLFYVGSYLNLLVSALFVSV, ATLGIAITLGKAYLFLFLSIL, and FLLPVSLGNLLLTASLQLALL.

Belongs to the complex I subunit 1 family. In terms of assembly, NDH is composed of at least 16 different subunits, 5 of which are encoded in the nucleus.

Its subcellular location is the plastid. The protein localises to the chloroplast thylakoid membrane. The enzyme catalyses a plastoquinone + NADH + (n+1) H(+)(in) = a plastoquinol + NAD(+) + n H(+)(out). The catalysed reaction is a plastoquinone + NADPH + (n+1) H(+)(in) = a plastoquinol + NADP(+) + n H(+)(out). Its function is as follows. NDH shuttles electrons from NAD(P)H:plastoquinone, via FMN and iron-sulfur (Fe-S) centers, to quinones in the photosynthetic chain and possibly in a chloroplast respiratory chain. The immediate electron acceptor for the enzyme in this species is believed to be plastoquinone. Couples the redox reaction to proton translocation, and thus conserves the redox energy in a proton gradient. This is NAD(P)H-quinone oxidoreductase subunit 1, chloroplastic from Chaetosphaeridium globosum (Charophycean green alga).